The following is a 139-amino-acid chain: Large-conductance mechanosensitive channel (139 aa).

The next 2 helical transmembrane spans lie at 19–39 (VAVI…ADVI) and 81–101 (GNFL…FMVV).

This sequence belongs to the MscL family. Homopentamer.

The protein resides in the cell inner membrane. In terms of biological role, channel that opens in response to stretch forces in the membrane lipid bilayer. May participate in the regulation of osmotic pressure changes within the cell. This chain is Large-conductance mechanosensitive channel, found in Nitrobacter hamburgensis (strain DSM 10229 / NCIMB 13809 / X14).